A 79-amino-acid polypeptide reads, in one-letter code: Conotoxin ArMKLT2-031 (79 aa).

An N-terminal signal peptide occupies residues 1–22 (MKLTCVLIIAVLFLTACQLTTG). Positions 23–46 (ETYSRGEQKDHALRSTDKNSKLTR) are excised as a propeptide. Pyrrolidone carboxylic acid is present on glutamine 47. Disulfide bonds link cysteine 48/cysteine 62, cysteine 55/cysteine 66, and cysteine 61/cysteine 73.

The protein belongs to the conotoxin O1 superfamily. As to expression, expressed by the venom duct.

It is found in the secreted. The sequence is that of Conotoxin ArMKLT2-031 from Conus arenatus (Sand-dusted cone).